Reading from the N-terminus, the 431-residue chain is MAAQASEKLQKLDLNGQSGDAEADAPAAGQTQAGEAEDDSDDDEVEDGNAAGEGAASGGGAKVQSSPPRVPLSTLFAGKEYPEGEIVEYQNENSYRTTNEEKRYLDRMKNDFLQEYRQAAEVHRQVRQYAQKTIKPGQTLTEIAEGIEESVRALTGHQGLEEGDNLKGGMGFPCGLSINHCAAHYTPNAGNKMVLQQGDVMKVDFGAHINGRIVDSAFTVAFDPVYDPLLAAVKDATNTGIREAGIDVRMSDIGAAIQEAMESYEVEINGTMYPVKCIRNLNGHNIDQHIIHGGKSVPIVKGGDQTKMEEGEVFAIETFGSTGKGYVREDMETSHYALIPDHSQVPLRLSSAKNLLNVINKNFGTLPFCRRYLDRLGQDKYLLGLNNLVSSGIVQDYPPLCDIKGSYTAQYEHTIVLRPNVKEVISRGDDY.

The tract at residues 1-76 (MAAQASEKLQ…PPRVPLSTLF (76 aa)) is disordered. Residues 35–47 (EAEDDSDDDEVED) show a composition bias toward acidic residues. His-184 contacts substrate. Positions 204, 215, and 284 each coordinate a divalent metal cation. Substrate is bound at residue His-292. A divalent metal cation is bound by residues Glu-317 and Glu-412.

This sequence belongs to the peptidase M24A family. Methionine aminopeptidase eukaryotic type 2 subfamily. Requires Co(2+) as cofactor. Zn(2+) is required as a cofactor. The cofactor is Mn(2+). It depends on Fe(2+) as a cofactor.

The protein resides in the cytoplasm. The catalysed reaction is Release of N-terminal amino acids, preferentially methionine, from peptides and arylamides.. Its function is as follows. Cotranslationally removes the N-terminal methionine from nascent proteins. The N-terminal methionine is often cleaved when the second residue in the primary sequence is small and uncharged (Met-Ala-, Cys, Gly, Pro, Ser, Thr, or Val). This Aspergillus niger (strain ATCC MYA-4892 / CBS 513.88 / FGSC A1513) protein is Methionine aminopeptidase 2-2.